A 319-amino-acid polypeptide reads, in one-letter code: D-alanine--D-alanine ligase (319 aa).

The ATP-grasp domain maps to 120–315 (KRVLAQAGVP…YPELLRRLVE (196 aa)). 147–198 (DPPFFVKPANTGSSVGISRVERFQDLEAALALAFRYDEKAVVEKALSPVREL) serves as a coordination point for ATP. 3 residues coordinate Mg(2+): Asp-270, Glu-282, and Asn-284.

It belongs to the D-alanine--D-alanine ligase family. Mg(2+) serves as cofactor. Requires Mn(2+) as cofactor.

It localises to the cytoplasm. It carries out the reaction 2 D-alanine + ATP = D-alanyl-D-alanine + ADP + phosphate + H(+). Its pathway is cell wall biogenesis; peptidoglycan biosynthesis. Its function is as follows. Cell wall formation. The chain is D-alanine--D-alanine ligase from Thermus thermophilus (strain ATCC 27634 / DSM 579 / HB8).